Here is a 185-residue protein sequence, read N- to C-terminus: Adenine phosphoribosyltransferase (185 aa).

It belongs to the purine/pyrimidine phosphoribosyltransferase family. In terms of assembly, homodimer.

The protein localises to the cytoplasm. It carries out the reaction AMP + diphosphate = 5-phospho-alpha-D-ribose 1-diphosphate + adenine. The protein operates within purine metabolism; AMP biosynthesis via salvage pathway; AMP from adenine: step 1/1. In terms of biological role, catalyzes a salvage reaction resulting in the formation of AMP, that is energically less costly than de novo synthesis. The protein is Adenine phosphoribosyltransferase of Aliarcobacter butzleri (strain RM4018) (Arcobacter butzleri).